The following is a 246-amino-acid chain: 3-deoxy-manno-octulosonate cytidylyltransferase (246 aa).

Belongs to the KdsB family.

The protein localises to the cytoplasm. It carries out the reaction 3-deoxy-alpha-D-manno-oct-2-ulosonate + CTP = CMP-3-deoxy-beta-D-manno-octulosonate + diphosphate. Its pathway is nucleotide-sugar biosynthesis; CMP-3-deoxy-D-manno-octulosonate biosynthesis; CMP-3-deoxy-D-manno-octulosonate from 3-deoxy-D-manno-octulosonate and CTP: step 1/1. It functions in the pathway bacterial outer membrane biogenesis; lipopolysaccharide biosynthesis. Activates KDO (a required 8-carbon sugar) for incorporation into bacterial lipopolysaccharide in Gram-negative bacteria. The polypeptide is 3-deoxy-manno-octulosonate cytidylyltransferase (Rickettsia prowazekii (strain Madrid E)).